Reading from the N-terminus, the 3184-residue chain is Cilia and flagella-associated protein 47 (3184 aa).

A Calponin-homology (CH) domain is found at 1729–1851; the sequence is SDSERILLSW…LCVYLYERLP (123 aa). A disordered region spans residues 2491–2514; it reads RDEEESQEETDTEKDFSSQETPSD. The segment covering 2493–2502 has biased composition (acidic residues); sequence EEESQEETDT.

Interacts with CFAP65. In terms of tissue distribution, highly expressed in spermatzoa (at protein level).

It is found in the cytoplasm. The protein localises to the cytoskeleton. It localises to the flagellum basal body. Functionally, plays a role in flagellar formation and sperm motility. The sequence is that of Cilia and flagella-associated protein 47 from Mus musculus (Mouse).